The chain runs to 504 residues: L-carnitine/gamma-butyrobetaine antiporter (504 aa).

A run of 12 helical transmembrane segments spans residues 10-30, 51-71, 92-112, 143-163, 195-215, 231-251, 263-283, 316-336, 347-367, 398-418, 446-466, and 475-495; these read IEPK…WLTV, WGWA…WLVF, IFMM…SIEI, GPLP…FFFV, FYLV…TPLV, LDAI…ACGL, SYLS…SFIM, WTVF…IFLA, LCFG…TVLG, WAAL…CFIA, LLVR…LLAL, and AIIA…LSFI.

This sequence belongs to the BCCT transporter (TC 2.A.15) family. CaiT subfamily. As to quaternary structure, homotrimer.

Its subcellular location is the cell inner membrane. The catalysed reaction is 4-(trimethylamino)butanoate(in) + (R)-carnitine(out) = 4-(trimethylamino)butanoate(out) + (R)-carnitine(in). It participates in amine and polyamine metabolism; carnitine metabolism. Functionally, catalyzes the exchange of L-carnitine for gamma-butyrobetaine. This Shigella flexneri serotype 5b (strain 8401) protein is L-carnitine/gamma-butyrobetaine antiporter.